The sequence spans 279 residues: Vitamin B12-binding protein (279 aa).

The first 20 residues, 1-20 (MTFRFLCWLTGLLLCTAAYA), serve as a signal peptide directing secretion. The 253-residue stretch at 24–276 (RVISLAPHAT…QLAELKLAPS (253 aa)) folds into the Fe/B12 periplasmic-binding domain. A disulfide bridge links C189 with C265.

Belongs to the BtuF family. The complex is composed of two ATP-binding proteins (BtuD), two transmembrane proteins (BtuC) and a solute-binding protein (BtuF).

It localises to the periplasm. In terms of biological role, part of the ABC transporter complex BtuCDF involved in vitamin B12 import. Binds vitamin B12 and delivers it to the periplasmic surface of BtuC. The protein is Vitamin B12-binding protein of Pectobacterium atrosepticum (strain SCRI 1043 / ATCC BAA-672) (Erwinia carotovora subsp. atroseptica).